The following is a 753-amino-acid chain: ATPase family gene 2 protein homolog B (753 aa).

Methionine 1 is subject to N-acetylmethionine. The required for interaction with AFG2A and CINP stretch occupies residues 1–189 (MAPDSDPFPE…PRTRVSLGGE (189 aa)). The interval 171 to 203 (SPDPAGLVTPRTRVSLGGEPPSEAQPQPEVPLG) is disordered. ATP contacts are provided by residues 241–248 (GPPGVGKT) and 505–512 (GPPGCAKT).

The protein belongs to the AAA ATPase family. AFG2 subfamily. Part of the 55LCC heterohexameric ATPase complex composed at least of AIRIM, AFG2A, AFG2B and CINP. Associates with pre-60S ribosomal particles. Expressed in both neurons and glia during embryonic and adult stages of brain development.

Its subcellular location is the cytoplasm. It localises to the cytoskeleton. The protein resides in the spindle. It is found in the nucleus. It catalyses the reaction ATP + H2O = ADP + phosphate + H(+). In the context of 55LCC heterohexameric ATPase complex, the ATPase activity is stimulated by DNA binding and inhibited in presence of RNA. In terms of biological role, ATP-dependent chaperone part of the 55LCC heterohexameric ATPase complex which is chromatin-associated and promotes replisome proteostasis to maintain replication fork progression and genome stability. Required for replication fork progression, sister chromatid cohesion, and chromosome stability. The ATPase activity is specifically enhanced by replication fork DNA and is coupled to cysteine protease-dependent cleavage of replisome substrates in response to replication fork damage. Uses ATPase activity to process replisome substrates in S-phase, facilitating their proteolytic turnover from chromatin to ensure DNA replication and mitotic fidelity. Plays an essential role in the cytoplasmic maturation steps of pre-60S ribosomal particles by promoting the release of shuttling protein RSL24D1/RLP24 from the pre-ribosomal particles. In Homo sapiens (Human), this protein is ATPase family gene 2 protein homolog B.